The following is a 503-amino-acid chain: Probable folate-biopterin transporter 6 (503 aa).

The next 12 helical transmembrane spans lie at 56-76 (SFVL…GSIF), 101-121 (LYYI…VFPI), 128-148 (PYFV…VVLG), 153-173 (ALAL…DVVI), 194-214 (LCMV…GVFV), 221-241 (GALG…FFIY), 281-301 (LYMF…FYWY), 314-334 (FVGI…LIYH), 344-364 (NILF…LVFI), 369-389 (LTLG…TKMI), 404-424 (LCPL…DSFG), and 450-470 (WLVI…VFLV).

It belongs to the major facilitator superfamily. Folate-biopterin transporter (TC 2.A.71) family.

The protein resides in the membrane. Its function is as follows. Could mediate folate transport. This Arabidopsis thaliana (Mouse-ear cress) protein is Probable folate-biopterin transporter 6.